Reading from the N-terminus, the 926-residue chain is MASPGIEVELLVKGHSDLGEVAPEVKPSDSQTSVAIADLEWREMEGDDCGFHYGDGTNEAQDNDFPTVERSRLQEMLSLLGLETYQAQKLTLQDSLQISFDSMKNWAPQVPKDLPWHFLRKLQALNAEARNTTMVLDVPPEAWPAEKESQAEEEMMYWDPAEDVAADIYSFSELPMPDTPVNPLDLLCALLLSSDTFLQQEVLLKMSLCQFALPLVLPDSENHYHTFLLWALRGVVRTWWFQPLRSLGSFREDSVVLSRVPTFAFVRMDVSSNSKSQLLNAVLSPARRQWDCFWHRDLNLGTNPREISDGLVEISWFFPSGKEDLDVFPEPMAFLNLRGDIGSHWLQFKLLTEVSSAVFILTDNISKKEYKLLYSMKESTTKYYFILSPYRGKRNTNLRFLNRLIPVLKIDHSHVLVKVSSTDSEGFVRRIRAIMCSVARSPCRRVSVEDMAHAARKLGLRVDEDFEECQKAKDRMEKILRKIKDVDAYKRDELRLQGEPARRAAQAEREFCQLQWVPEPPEKHRAELRRRVLELRVQQNGQEPTSGVQEFILGISSPSPSERQYFLRWMEWGLARLGQPRPRQPPETLLTLRPKLGGPSDLTEPLWPEPLGVEHFLREMGQFYEAESCLIEAGRLPAGQRRFAHFPGVAVELLLGGLPLELVDGATLSIPVRWVTGLLKELHTRLDRRSRLVVLSALGVPGTGKSTLLNTMFGLKFATGRSCSPRGAFMQLLPVAEGFSQDLGCDQILVIDSGGLISGALASAGDRFELEASLATLLMGLSNVTVVSLAETKDIPPAVLHAFLRLEKMGHMPNYQFVYQNLHDLPVPSPKPRDRRQLLDPPSDLSRATHLEKQGGGFRTLAGLAERQHVWHIPALWHGAPPMAAVSLGYSEAIFELKRCLLENIRNGLSNQNQNIQQLIELLRRL.

Residue S3 is modified to Phosphoserine. Residues 689 to 924 enclose the VLIG-type G domain; the sequence is RSRLVVLSAL…NIQQLIELLR (236 aa).

This sequence belongs to the TRAFAC class dynamin-like GTPase superfamily. Very large inducible GTPase (VLIG) family.

The protein localises to the cytoplasm. It is found in the nucleus. May be involved in cell cycle progression through the regulation of cyclin D1 expression. In Mus musculus (Mouse), this protein is Up-regulator of cell proliferation (Urgcp).